A 725-amino-acid polypeptide reads, in one-letter code: G-quartet DNA-binding protein TGP1 (725 aa).

The short motif at 241-258 is the Nuclear localization signal element; the sequence is KKALTDVLQIHEKKERVH. Disordered regions lie at residues 252 to 284 and 468 to 614; these read EKKE…LQET and EIHK…GKRG. Residues 256 to 277 are compositionally biased toward basic residues; the sequence is RVHKQQNKNKNPRNAHKNHNRQ. Over residues 468-478 the composition is skewed to basic and acidic residues; sequence EIHKIDRERKR. Low complexity predominate over residues 517–544; the sequence is NKYKNTSVQNNNNNKNQQRSQSQNQRPP. Residues 545-564 are compositionally biased toward basic and acidic residues; it reads RNYDNRQGGENRNNRQRNEN. Low complexity predominate over residues 565-593; the sequence is NRNNFNGNGHRVNNQNNQRNRNSSYPRNN.

Post-translationally, the N-terminus is blocked.

Its subcellular location is the nucleus. Binds specifically to parallel G4-DNA, a four-stranded structure stabilized by tetrads of hydrogen-bonded guanines. In Tetrahymena thermophila, this protein is G-quartet DNA-binding protein TGP1 (TGP1).